The sequence spans 281 residues: NADPH-dependent 7-cyano-7-deazaguanine reductase (281 aa).

Position 86–88 (I86–S88) interacts with substrate. S88–K89 provides a ligand contact to NADPH. C189 functions as the Thioimide intermediate in the catalytic mechanism. The active-site Proton donor is D196. H228–E229 is a substrate binding site. R257–G258 lines the NADPH pocket.

The protein belongs to the GTP cyclohydrolase I family. QueF type 2 subfamily. In terms of assembly, homodimer.

It localises to the cytoplasm. The enzyme catalyses 7-aminomethyl-7-carbaguanine + 2 NADP(+) = 7-cyano-7-deazaguanine + 2 NADPH + 3 H(+). It participates in tRNA modification; tRNA-queuosine biosynthesis. In terms of biological role, catalyzes the NADPH-dependent reduction of 7-cyano-7-deazaguanine (preQ0) to 7-aminomethyl-7-deazaguanine (preQ1). This Mannheimia succiniciproducens (strain KCTC 0769BP / MBEL55E) protein is NADPH-dependent 7-cyano-7-deazaguanine reductase.